The sequence spans 311 residues: Protoheme IX farnesyltransferase (311 aa).

9 helical membrane-spanning segments follow: residues 33–53, 55–75, 104–124, 127–147, 155–175, 181–201, 228–248, 252–272, and 287–307; these read VVMLMLLTSLIGMLLATPSPA, LWLLVLGNLGIGLCAGAAAAV, NALLFSALLGGVGLWILSSFI, LTAWLTLASLLGYAVIYTLFL, IVIGGLAGAAPPLLGWTAVTG, GLLLVLIIFAWTPPHFWALAL, IVLYTVILIAVTLLPFATRMM, YLVGALVLGAGFLYRALKLLV, and IIYLMALFVVMLVDHYLFPIP.

It belongs to the UbiA prenyltransferase family. Protoheme IX farnesyltransferase subfamily.

It localises to the cell inner membrane. The catalysed reaction is heme b + (2E,6E)-farnesyl diphosphate + H2O = Fe(II)-heme o + diphosphate. It participates in porphyrin-containing compound metabolism; heme O biosynthesis; heme O from protoheme: step 1/1. Functionally, converts heme B (protoheme IX) to heme O by substitution of the vinyl group on carbon 2 of heme B porphyrin ring with a hydroxyethyl farnesyl side group. In Teredinibacter turnerae (strain ATCC 39867 / T7901), this protein is Protoheme IX farnesyltransferase.